Here is a 165-residue protein sequence, read N- to C-terminus: Regulator of sigma D (165 aa).

It belongs to the Rsd/AlgQ family. In terms of assembly, interacts with RpoD.

It localises to the cytoplasm. Functionally, binds RpoD and negatively regulates RpoD-mediated transcription activation by preventing the interaction between the primary sigma factor RpoD with the catalytic core of the RNA polymerase and with promoter DNA. May be involved in replacement of the RNA polymerase sigma subunit from RpoD to RpoS during the transition from exponential growth to the stationary phase. This Enterobacter sp. (strain 638) protein is Regulator of sigma D.